A 193-amino-acid polypeptide reads, in one-letter code: ATP-dependent Clp protease proteolytic subunit (193 aa).

The Nucleophile role is filled by S98. Residue H123 is part of the active site.

It belongs to the peptidase S14 family. As to quaternary structure, fourteen ClpP subunits assemble into 2 heptameric rings which stack back to back to give a disk-like structure with a central cavity, resembling the structure of eukaryotic proteasomes.

It is found in the cytoplasm. The catalysed reaction is Hydrolysis of proteins to small peptides in the presence of ATP and magnesium. alpha-casein is the usual test substrate. In the absence of ATP, only oligopeptides shorter than five residues are hydrolyzed (such as succinyl-Leu-Tyr-|-NHMec, and Leu-Tyr-Leu-|-Tyr-Trp, in which cleavage of the -Tyr-|-Leu- and -Tyr-|-Trp bonds also occurs).. Cleaves peptides in various proteins in a process that requires ATP hydrolysis. Has a chymotrypsin-like activity. Plays a major role in the degradation of misfolded proteins. This is ATP-dependent Clp protease proteolytic subunit from Glaesserella parasuis serovar 5 (strain SH0165) (Haemophilus parasuis).